A 327-amino-acid chain; its full sequence is MSLNPPNNLEHIITSQTLKWVFVGGKGGVGKTTTSCSLGVLIADRNPQKKVLIISTDPAHNTSDAFDIKFGAEPKVVPGVPNLSVMEIDVKDAMKGVFDESEQGTNQNGGFGLLSELTGMMGMLKSVPGIDEAIAFSQIINQAQQMNYDLVLFDTAPTGHTLRFLSLPTLLRDMLEKVIKLQDSFGPMMSQFGGMMGMNINFNELKPKMEHMLKTSEQIVEDFTNPNLTTFIPVLIPEFLPLYETERLIQELMNLNMDANSIIVNQILPVNDCCDYCKNKRAIQAKYLGQIDVLYGDFHLIKINMQTNEVRGVAALRAFSKNFEAKH.

26–33 (KGGVGKTT) is a binding site for ATP. The active site involves aspartate 57. ATP-binding residues include glutamate 238 and asparagine 265. Zn(2+) contacts are provided by cysteine 274 and cysteine 277.

The protein belongs to the arsA ATPase family. In terms of assembly, homodimer.

It localises to the cytoplasm. It is found in the endoplasmic reticulum. In terms of biological role, ATPase required for the post-translational delivery of tail-anchored (TA) proteins to the endoplasmic reticulum. Recognizes and selectively binds the transmembrane domain of TA proteins in the cytosol. This complex then targets to the endoplasmic reticulum by membrane-bound receptors, where the tail-anchored protein is released for insertion. This process is regulated by ATP binding and hydrolysis. ATP binding drives the homodimer towards the closed dimer state, facilitating recognition of newly synthesized TA membrane proteins. ATP hydrolysis is required for insertion. Subsequently, the homodimer reverts towards the open dimer state, lowering its affinity for the membrane-bound receptor, and returning it to the cytosol to initiate a new round of targeting. The chain is ATPase ASNA1 homolog from Entamoeba histolytica (strain ATCC 30459 / HM-1:IMSS / ABRM).